We begin with the raw amino-acid sequence, 225 residues long: MGHKVNPIGLRLGVNRTWDSRWYAGQDYARLLHEDLKLRAFLRRKLSGAGVSRVVIERPAKKPRVTIYAARPGVVIGKKGQDIDALRKELSRMAKTDVALNIVEIRKPEIDATLVAENIAQQLERRVAFRRAMKRAIQSAMRLGAQGIRITCGGRLGGAEIARAEKYREGRVPLHTLRADIDYGTATAKTTYGTCGVKVWIFKGEILAHDPLAQDRRAAEQAPQR.

One can recognise a KH type-2 domain in the interval 38-106; that stretch reads LRAFLRRKLS…DVALNIVEIR (69 aa).

Belongs to the universal ribosomal protein uS3 family. As to quaternary structure, part of the 30S ribosomal subunit. Forms a tight complex with proteins S10 and S14.

In terms of biological role, binds the lower part of the 30S subunit head. Binds mRNA in the 70S ribosome, positioning it for translation. The sequence is that of Small ribosomal subunit protein uS3 from Gluconobacter oxydans (strain 621H) (Gluconobacter suboxydans).